We begin with the raw amino-acid sequence, 388 residues long: uncharacterized protein (388 aa).

This is an uncharacterized protein from Klebsiella pneumoniae.